Consider the following 1267-residue polypeptide: DNA-directed RNA polymerase subunit beta (1267 aa).

The protein belongs to the RNA polymerase beta chain family. The RNAP catalytic core consists of 2 alpha, 1 beta, 1 beta' and 1 omega subunit. When a sigma factor is associated with the core the holoenzyme is formed, which can initiate transcription.

The enzyme catalyses RNA(n) + a ribonucleoside 5'-triphosphate = RNA(n+1) + diphosphate. DNA-dependent RNA polymerase catalyzes the transcription of DNA into RNA using the four ribonucleoside triphosphates as substrates. The polypeptide is DNA-directed RNA polymerase subunit beta (rpoB) (Carsonella ruddii (strain PV)).